The chain runs to 237 residues: MAHNNNNNINNNNNNNNNNNNNNNKNNNSEYKTNRNLLYKTILNDIENSLQSLIKPQELTNLLEDNINKLKELDGVQPTNTFGNLQNTSTNTTTTTTTTTTTTTTSSPNNNVITPNSNLKQTLSPSVLIEHLNLFGNENFEEGDDEEETSSDSDSSSSSSTSSSSSERVPSKKLKPMAKPRPGGCSICKTQETPYWRKGKDGDKTVYLCNACGLQIYKKKKKEKLSKEKHSIKNVLN.

2 stretches are compositionally biased toward low complexity: residues 1-28 and 87-118; these read MAHN…KNNN and NTST…PNSN. 3 disordered regions span residues 1-31, 78-119, and 140-186; these read MAHN…NSEY, PTNT…NSNL, and FEEG…GGCS. The span at 140–151 shows a compositional bias: acidic residues; that stretch reads FEEGDDEEETSS. Low complexity predominate over residues 152–167; that stretch reads DSDSSSSSSTSSSSSE. A GATA-type zinc finger spans residues 185-212; sequence CSICKTQETPYWRKGKDGDKTVYLCNAC.

In Dictyostelium discoideum (Social amoeba), this protein is GATA zinc finger domain-containing protein 18 (gtaR).